Consider the following 229-residue polypeptide: Ras-related protein RABA6b (229 aa).

20–27 (GDSAVGKS) serves as a coordination point for GTP. Positions 42 to 50 (SKPTIGVDF) match the Effector region motif. Residues 68–72 (DTAGQ), 126–129 (NKSD), and 156–157 (SA) each bind GTP. S-geranylgeranyl cysteine attachment occurs at residues C226 and C227.

It belongs to the small GTPase superfamily. Rab family.

It is found in the cell membrane. Functionally, intracellular vesicle trafficking and protein transport. This chain is Ras-related protein RABA6b (RABA6B), found in Arabidopsis thaliana (Mouse-ear cress).